The sequence spans 321 residues: MSMPGINVSNLLNEHEELGLRLLAGQKGLTNRINMSEINRPGLSLTGFYESFAHDRIQIFGKGEWAYITSRTPEDLEKIAAEFFGFHLNCIIFTHGNMPPPIFMENCEKLGIPLMISEVSTHKFITLISGILDRSLAPRTMRHGVLIEVFGIGILLSGKSGVGKSETALELIERGHRLVADDMVEIRRLSESYLIGTCSDLLRHHMEIRGLGILNIKDIFGIGSVRDHKLIELIIHLEEWTEGKDFDRTGLENPTEELLGVQIPLIRVPVRPGRNIPIIVETAAMNQRLRKLGKNAAQEFNQKLSQYLQQGKVERNPTQNQ.

Active-site residues include H143 and K164. 158–165 (GKSGVGKS) provides a ligand contact to ATP. S165 is a Mg(2+) binding site. Catalysis depends on D182, which acts as the Proton acceptor; for phosphorylation activity. Proton donor; for dephosphorylation activity. Positions 206-215 (MEIRGLGILN) are important for the catalytic mechanism of both phosphorylation and dephosphorylation. A Mg(2+)-binding site is contributed by E207. R248 is an active-site residue. The segment at 269-274 (PVRPGR) is important for the catalytic mechanism of dephosphorylation.

It belongs to the HPrK/P family. In terms of assembly, homohexamer. Requires Mg(2+) as cofactor.

It carries out the reaction [HPr protein]-L-serine + ATP = [HPr protein]-O-phospho-L-serine + ADP + H(+). The enzyme catalyses [HPr protein]-O-phospho-L-serine + phosphate + H(+) = [HPr protein]-L-serine + diphosphate. Its function is as follows. Catalyzes the ATP- as well as the pyrophosphate-dependent phosphorylation of a specific serine residue in HPr, a phosphocarrier protein of the phosphoenolpyruvate-dependent sugar phosphotransferase system (PTS). HprK/P also catalyzes the pyrophosphate-producing, inorganic phosphate-dependent dephosphorylation (phosphorolysis) of seryl-phosphorylated HPr (P-Ser-HPr). The sequence is that of HPr kinase/phosphorylase from Leptospira interrogans serogroup Icterohaemorrhagiae serovar copenhageni (strain Fiocruz L1-130).